The following is a 249-amino-acid chain: Probable phosphatase Shal_1519 (249 aa).

Residues histidine 8, histidine 10, histidine 16, histidine 41, glutamate 74, histidine 102, histidine 132, aspartate 193, and histidine 195 each coordinate Zn(2+).

Belongs to the PHP family. Zn(2+) serves as cofactor.

This is Probable phosphatase Shal_1519 from Shewanella halifaxensis (strain HAW-EB4).